Reading from the N-terminus, the 365-residue chain is 3-isopropylmalate dehydrogenase (365 aa).

Residue 78 to 91 participates in NAD(+) binding; it reads GPKWDTLPAEERPE. 4 residues coordinate substrate: Arg99, Arg109, Arg138, and Asp227. Residues Asp227, Asp251, and Asp255 each coordinate Mg(2+). 285–297 provides a ligand contact to NAD(+); that stretch reads GSAPDIAGKNIAN.

This sequence belongs to the isocitrate and isopropylmalate dehydrogenases family. LeuB type 1 subfamily. As to quaternary structure, homodimer. The cofactor is Mg(2+). Mn(2+) serves as cofactor.

It localises to the cytoplasm. It catalyses the reaction (2R,3S)-3-isopropylmalate + NAD(+) = 4-methyl-2-oxopentanoate + CO2 + NADH. Its pathway is amino-acid biosynthesis; L-leucine biosynthesis; L-leucine from 3-methyl-2-oxobutanoate: step 3/4. Its function is as follows. Catalyzes the oxidation of 3-carboxy-2-hydroxy-4-methylpentanoate (3-isopropylmalate) to 3-carboxy-4-methyl-2-oxopentanoate. The product decarboxylates to 4-methyl-2 oxopentanoate. In Syntrophotalea carbinolica (strain DSM 2380 / NBRC 103641 / GraBd1) (Pelobacter carbinolicus), this protein is 3-isopropylmalate dehydrogenase.